A 274-amino-acid chain; its full sequence is NADPH-dependent 7-cyano-7-deazaguanine reductase (274 aa).

The interval 1 to 33 (MPKKDALDHLSLGQHTDYPNEYDPKQLQPVPRS) is disordered. A substrate-binding site is contributed by 84 to 86 (IES). 86-87 (SK) serves as a coordination point for NADPH. The Thioimide intermediate role is filled by Cys183. Asp190 serves as the catalytic Proton donor. 222 to 223 (HE) provides a ligand contact to substrate. 250-251 (RG) is an NADPH binding site.

It belongs to the GTP cyclohydrolase I family. QueF type 2 subfamily. In terms of assembly, homodimer.

It is found in the cytoplasm. It carries out the reaction 7-aminomethyl-7-carbaguanine + 2 NADP(+) = 7-cyano-7-deazaguanine + 2 NADPH + 3 H(+). The protein operates within tRNA modification; tRNA-queuosine biosynthesis. Catalyzes the NADPH-dependent reduction of 7-cyano-7-deazaguanine (preQ0) to 7-aminomethyl-7-deazaguanine (preQ1). This chain is NADPH-dependent 7-cyano-7-deazaguanine reductase, found in Idiomarina loihiensis (strain ATCC BAA-735 / DSM 15497 / L2-TR).